Consider the following 354-residue polypeptide: Uroporphyrinogen decarboxylase (354 aa).

Residues 27 to 31 (RQAGR), D77, Y154, T209, and H327 contribute to the substrate site.

This sequence belongs to the uroporphyrinogen decarboxylase family. Homodimer.

The protein resides in the cytoplasm. It catalyses the reaction uroporphyrinogen III + 4 H(+) = coproporphyrinogen III + 4 CO2. Its pathway is porphyrin-containing compound metabolism; protoporphyrin-IX biosynthesis; coproporphyrinogen-III from 5-aminolevulinate: step 4/4. In terms of biological role, catalyzes the decarboxylation of four acetate groups of uroporphyrinogen-III to yield coproporphyrinogen-III. This is Uroporphyrinogen decarboxylase from Salmonella paratyphi A (strain ATCC 9150 / SARB42).